The chain runs to 127 residues: Large ribosomal subunit protein bL12 (127 aa).

This sequence belongs to the bacterial ribosomal protein bL12 family. Homodimer. Part of the ribosomal stalk of the 50S ribosomal subunit. Forms a multimeric L10(L12)X complex, where L10 forms an elongated spine to which 2 to 4 L12 dimers bind in a sequential fashion. Binds GTP-bound translation factors.

Functionally, forms part of the ribosomal stalk which helps the ribosome interact with GTP-bound translation factors. Is thus essential for accurate translation. The chain is Large ribosomal subunit protein bL12 from Nitratiruptor sp. (strain SB155-2).